Reading from the N-terminus, the 105-residue chain is Molt-inhibiting hormone (105 aa).

Positions Met-1–Ala-28 are cleaved as a signal peptide. Disulfide bonds link Cys-35/Cys-72, Cys-52/Cys-68, and Cys-55/Cys-81.

The protein belongs to the arthropod CHH/MIH/GIH/VIH hormone family. Produced by the medulla terminalis X-organ in the eyestalks and transported to the sinus gland where it is stored and released.

The protein resides in the secreted. Its function is as follows. Inhibits Y-organs where molting hormone (ecdysteroid) is secreted. A molting cycle is initiated when MIH secretion diminishes or stops. Has little or no hyperglycemic activity. In Penaeus japonicus (Kuruma prawn), this protein is Molt-inhibiting hormone.